A 509-amino-acid polypeptide reads, in one-letter code: Bifunctional purine biosynthesis protein PurH (509 aa).

Positions 1–145 (MIKRALISVF…KSFKDVVVIS (145 aa)) constitute an MGS-like domain.

The protein belongs to the PurH family.

It carries out the reaction (6R)-10-formyltetrahydrofolate + 5-amino-1-(5-phospho-beta-D-ribosyl)imidazole-4-carboxamide = 5-formamido-1-(5-phospho-D-ribosyl)imidazole-4-carboxamide + (6S)-5,6,7,8-tetrahydrofolate. The enzyme catalyses IMP + H2O = 5-formamido-1-(5-phospho-D-ribosyl)imidazole-4-carboxamide. It functions in the pathway purine metabolism; IMP biosynthesis via de novo pathway; 5-formamido-1-(5-phospho-D-ribosyl)imidazole-4-carboxamide from 5-amino-1-(5-phospho-D-ribosyl)imidazole-4-carboxamide (10-formyl THF route): step 1/1. Its pathway is purine metabolism; IMP biosynthesis via de novo pathway; IMP from 5-formamido-1-(5-phospho-D-ribosyl)imidazole-4-carboxamide: step 1/1. In Brachyspira hyodysenteriae (strain ATCC 49526 / WA1), this protein is Bifunctional purine biosynthesis protein PurH.